The chain runs to 942 residues: Isoleucine--tRNA ligase (942 aa).

The 'HIGH' region signature appears at 58–68; that stretch reads PYANGDIHIGH. Glutamate 566 serves as a coordination point for L-isoleucyl-5'-AMP. Residues 607-611 carry the 'KMSKS' region motif; that stretch reads KMSKS. An ATP-binding site is contributed by lysine 610. Zn(2+)-binding residues include cysteine 905, cysteine 908, cysteine 925, and cysteine 928.

The protein belongs to the class-I aminoacyl-tRNA synthetase family. IleS type 1 subfamily. In terms of assembly, monomer. It depends on Zn(2+) as a cofactor.

Its subcellular location is the cytoplasm. The enzyme catalyses tRNA(Ile) + L-isoleucine + ATP = L-isoleucyl-tRNA(Ile) + AMP + diphosphate. Catalyzes the attachment of isoleucine to tRNA(Ile). As IleRS can inadvertently accommodate and process structurally similar amino acids such as valine, to avoid such errors it has two additional distinct tRNA(Ile)-dependent editing activities. One activity is designated as 'pretransfer' editing and involves the hydrolysis of activated Val-AMP. The other activity is designated 'posttransfer' editing and involves deacylation of mischarged Val-tRNA(Ile). This is Isoleucine--tRNA ligase from Pseudoalteromonas atlantica (strain T6c / ATCC BAA-1087).